The sequence spans 380 residues: Tubulin alpha chain (380 aa).

Residues Glu-46, Ser-115, Gly-119, Thr-120, Thr-154, Asn-181, and Asn-202 each contribute to the GTP site. Glu-46 is a binding site for Mg(2+). Glu-228 is a catalytic residue.

This sequence belongs to the tubulin family. In terms of assembly, dimer of alpha and beta chains. A typical microtubule is a hollow water-filled tube with an outer diameter of 25 nm and an inner diameter of 15 nM. Alpha-beta heterodimers associate head-to-tail to form protofilaments running lengthwise along the microtubule wall with the beta-tubulin subunit facing the microtubule plus end conferring a structural polarity. Microtubules usually have 13 protofilaments but different protofilament numbers can be found in some organisms and specialized cells. Mg(2+) serves as cofactor.

The protein localises to the cytoplasm. It is found in the cytoskeleton. It catalyses the reaction GTP + H2O = GDP + phosphate + H(+). Its function is as follows. Tubulin is the major constituent of microtubules, a cylinder consisting of laterally associated linear protofilaments composed of alpha- and beta-tubulin heterodimers. Microtubules grow by the addition of GTP-tubulin dimers to the microtubule end, where a stabilizing cap forms. Below the cap, tubulin dimers are in GDP-bound state, owing to GTPase activity of alpha-tubulin. The polypeptide is Tubulin alpha chain (TUB1) (Encephalitozoon hellem (Microsporidian parasite)).